The following is a 363-amino-acid chain: Phosphoserine aminotransferase (363 aa).

Arginine 42 contacts L-glutamate. Positions 105, 155, 175, and 198 each coordinate pyridoxal 5'-phosphate. At lysine 199 the chain carries N6-(pyridoxal phosphate)lysine. 240–241 (NT) is a binding site for pyridoxal 5'-phosphate.

This sequence belongs to the class-V pyridoxal-phosphate-dependent aminotransferase family. SerC subfamily. In terms of assembly, homodimer. The cofactor is pyridoxal 5'-phosphate.

It is found in the cytoplasm. The enzyme catalyses O-phospho-L-serine + 2-oxoglutarate = 3-phosphooxypyruvate + L-glutamate. The catalysed reaction is 4-(phosphooxy)-L-threonine + 2-oxoglutarate = (R)-3-hydroxy-2-oxo-4-phosphooxybutanoate + L-glutamate. Its pathway is amino-acid biosynthesis; L-serine biosynthesis; L-serine from 3-phospho-D-glycerate: step 2/3. The protein operates within cofactor biosynthesis; pyridoxine 5'-phosphate biosynthesis; pyridoxine 5'-phosphate from D-erythrose 4-phosphate: step 3/5. In terms of biological role, catalyzes the reversible conversion of 3-phosphohydroxypyruvate to phosphoserine and of 3-hydroxy-2-oxo-4-phosphonooxybutanoate to phosphohydroxythreonine. This is Phosphoserine aminotransferase from Herminiimonas arsenicoxydans.